A 192-amino-acid chain; its full sequence is A-type ATP synthase subunit E (192 aa).

It belongs to the V-ATPase E subunit family. In terms of assembly, has multiple subunits with at least A(3), B(3), C, D, E, F, H, I and proteolipid K(x).

The protein resides in the cell membrane. Component of the A-type ATP synthase that produces ATP from ADP in the presence of a proton gradient across the membrane. This chain is A-type ATP synthase subunit E, found in Methanoculleus marisnigri (strain ATCC 35101 / DSM 1498 / JR1).